An 85-amino-acid chain; its full sequence is Sec-independent protein translocase protein TatA (85 aa).

The chain crosses the membrane as a helical span at residues methionine 1–glycine 21. The segment covering phenylalanine 39–proline 51 has biased composition (basic and acidic residues). Positions phenylalanine 39–glycine 85 are disordered. The span at glycine 53 to glycine 62 shows a compositional bias: polar residues. Over residues arginine 66–glycine 85 the composition is skewed to basic and acidic residues.

Belongs to the TatA/E family. As to quaternary structure, the Tat system comprises two distinct complexes: a TatABC complex, containing multiple copies of TatA, TatB and TatC subunits, and a separate TatA complex, containing only TatA subunits. Substrates initially bind to the TatABC complex, which probably triggers association of the separate TatA complex to form the active translocon.

The protein resides in the cell inner membrane. In terms of biological role, part of the twin-arginine translocation (Tat) system that transports large folded proteins containing a characteristic twin-arginine motif in their signal peptide across membranes. TatA could form the protein-conducting channel of the Tat system. This Ralstonia pickettii (strain 12J) protein is Sec-independent protein translocase protein TatA.